The primary structure comprises 188 residues: Crossover junction endodeoxyribonuclease RuvC (188 aa).

Active-site residues include Asp14, Glu74, and Asp149. Residues Asp14, Glu74, and Asp149 each coordinate Mg(2+).

It belongs to the RuvC family. Homodimer which binds Holliday junction (HJ) DNA. The HJ becomes 2-fold symmetrical on binding to RuvC with unstacked arms; it has a different conformation from HJ DNA in complex with RuvA. In the full resolvosome a probable DNA-RuvA(4)-RuvB(12)-RuvC(2) complex forms which resolves the HJ. It depends on Mg(2+) as a cofactor.

It is found in the cytoplasm. The enzyme catalyses Endonucleolytic cleavage at a junction such as a reciprocal single-stranded crossover between two homologous DNA duplexes (Holliday junction).. Functionally, the RuvA-RuvB-RuvC complex processes Holliday junction (HJ) DNA during genetic recombination and DNA repair. Endonuclease that resolves HJ intermediates. Cleaves cruciform DNA by making single-stranded nicks across the HJ at symmetrical positions within the homologous arms, yielding a 5'-phosphate and a 3'-hydroxyl group; requires a central core of homology in the junction. The consensus cleavage sequence is 5'-(A/T)TT(C/G)-3'. Cleavage occurs on the 3'-side of the TT dinucleotide at the point of strand exchange. HJ branch migration catalyzed by RuvA-RuvB allows RuvC to scan DNA until it finds its consensus sequence, where it cleaves and resolves the cruciform DNA. This chain is Crossover junction endodeoxyribonuclease RuvC, found in Bacteroides fragilis (strain ATCC 25285 / DSM 2151 / CCUG 4856 / JCM 11019 / LMG 10263 / NCTC 9343 / Onslow / VPI 2553 / EN-2).